The primary structure comprises 215 residues: Peroxiredoxin-5, mitochondrial (215 aa).

The transit peptide at 1–53 (MGLAGVCVLRRSAGYILGGAAGQSVAATAAARRRSEGGWASGGVRSFSRAAAA) directs the protein to the mitochondrion. Residues 57-215 (IKVGDAIPAV…SLAPSIISQL (159 aa)) form the Thioredoxin domain. Lys76 carries the N6-acetyllysine modification. Lys84 carries the N6-acetyllysine; alternate modification. Lys84 bears the N6-succinyllysine; alternate mark. The Cysteine sulfenic acid (-SOH) intermediate role is filled by Cys101. Cys101 is lipidated: S-palmitoyl cysteine. Cys101 and Cys205 form a disulfide bridge. Lys117 bears the N6-succinyllysine mark. Ser172 and Ser183 each carry phosphoserine. Residues 213–215 (SQL) carry the Microbody targeting signal motif.

Belongs to the peroxiredoxin family. Prx5 subfamily. Monomer. Post-translationally, S-palmitoylated. Palmitoylation occurs on the active site, inhibiting its reactivity; therefore PRDX5 palmitoylation status determines its antioxidant capacity. S-palmitoylated. Depalmitoylated by ABHD10.

Its subcellular location is the mitochondrion. It is found in the cytoplasm. It localises to the peroxisome matrix. It catalyses the reaction a hydroperoxide + [thioredoxin]-dithiol = an alcohol + [thioredoxin]-disulfide + H2O. Thiol-specific peroxidase that catalyzes the reduction of hydrogen peroxide and organic hydroperoxides to water and alcohols, respectively. Plays a role in cell protection against oxidative stress by detoxifying peroxides and as sensor of hydrogen peroxide-mediated signaling events. This is Peroxiredoxin-5, mitochondrial (PRDX5) from Papio hamadryas (Hamadryas baboon).